The following is a 511-amino-acid chain: Maturase K (511 aa).

The protein belongs to the intron maturase 2 family. MatK subfamily.

The protein resides in the plastid. Its subcellular location is the chloroplast. Functionally, usually encoded in the trnK tRNA gene intron. Probably assists in splicing its own and other chloroplast group II introns. This is Maturase K from Psathyrostachys juncea (Russian wildrye).